Consider the following 154-residue polypeptide: Small ribosomal subunit protein uS15 (154 aa).

Residues 1 to 10 (MARMHSRRRG) show a composition bias toward basic residues. A disordered region spans residues 1-32 (MARMHSRRRGSSGSDRPTADEPPEWSEVDEDA). Positions 21–32 (EPPEWSEVDEDA) are enriched in acidic residues.

It belongs to the universal ribosomal protein uS15 family. Part of the 30S ribosomal subunit.

The polypeptide is Small ribosomal subunit protein uS15 (Natronomonas pharaonis (strain ATCC 35678 / DSM 2160 / CIP 103997 / JCM 8858 / NBRC 14720 / NCIMB 2260 / Gabara) (Halobacterium pharaonis)).